Here is a 647-residue protein sequence, read N- to C-terminus: DNA mismatch repair protein MutL (647 aa).

It belongs to the DNA mismatch repair MutL/HexB family.

In terms of biological role, this protein is involved in the repair of mismatches in DNA. It is required for dam-dependent methyl-directed DNA mismatch repair. May act as a 'molecular matchmaker', a protein that promotes the formation of a stable complex between two or more DNA-binding proteins in an ATP-dependent manner without itself being part of a final effector complex. The chain is DNA mismatch repair protein MutL from Bacillus cereus (strain ATCC 10987 / NRS 248).